The sequence spans 284 residues: MQQKVVHIGDIKVANDLPFVLFGGMNVLESRDLAMSICEHYVTVTQKLGIPYVFKASFDKANRSSIHSYRGPGLEEGMKIFQELKQTFGVKIITDVHESAQAQPVAEVVDVIQLPAFLARQTDLVEAMARTGAVINVKKPQFISPGQMGNIVDKFKEGGNDQVILCDRGSNFGYDNLVVDMLGFNVMAQATGGHPVIFDVTHSLQCRDPFGAASGGRRAQVAELARAGMAVGIAGLFLEAHPDPANAMCDGPSALPLAKLEPFLSQMKAIDDVVKSFPQLDTSK.

This sequence belongs to the KdsA family.

It localises to the cytoplasm. It carries out the reaction D-arabinose 5-phosphate + phosphoenolpyruvate + H2O = 3-deoxy-alpha-D-manno-2-octulosonate-8-phosphate + phosphate. The protein operates within carbohydrate biosynthesis; 3-deoxy-D-manno-octulosonate biosynthesis; 3-deoxy-D-manno-octulosonate from D-ribulose 5-phosphate: step 2/3. It participates in bacterial outer membrane biogenesis; lipopolysaccharide biosynthesis. This chain is 2-dehydro-3-deoxyphosphooctonate aldolase, found in Photorhabdus laumondii subsp. laumondii (strain DSM 15139 / CIP 105565 / TT01) (Photorhabdus luminescens subsp. laumondii).